The chain runs to 308 residues: Ribosomal RNA large subunit methyltransferase F (308 aa).

This sequence belongs to the methyltransferase superfamily. METTL16/RlmF family.

The protein localises to the cytoplasm. It carries out the reaction adenosine(1618) in 23S rRNA + S-adenosyl-L-methionine = N(6)-methyladenosine(1618) in 23S rRNA + S-adenosyl-L-homocysteine + H(+). In terms of biological role, specifically methylates the adenine in position 1618 of 23S rRNA. In Escherichia coli O157:H7, this protein is Ribosomal RNA large subunit methyltransferase F.